Here is a 429-residue protein sequence, read N- to C-terminus: Glutamate-1-semialdehyde 2,1-aminomutase 2 (429 aa).

K268 carries the N6-(pyridoxal phosphate)lysine modification.

Belongs to the class-III pyridoxal-phosphate-dependent aminotransferase family. HemL subfamily. Homodimer. It depends on pyridoxal 5'-phosphate as a cofactor.

Its subcellular location is the cytoplasm. It carries out the reaction (S)-4-amino-5-oxopentanoate = 5-aminolevulinate. It participates in porphyrin-containing compound metabolism; protoporphyrin-IX biosynthesis; 5-aminolevulinate from L-glutamyl-tRNA(Glu): step 2/2. The protein is Glutamate-1-semialdehyde 2,1-aminomutase 2 of Bacillus cereus (strain AH820).